The primary structure comprises 119 residues: Ribonuclease P protein component (119 aa).

This sequence belongs to the RnpA family. Consists of a catalytic RNA component (M1 or rnpB) and a protein subunit.

The catalysed reaction is Endonucleolytic cleavage of RNA, removing 5'-extranucleotides from tRNA precursor.. RNaseP catalyzes the removal of the 5'-leader sequence from pre-tRNA to produce the mature 5'-terminus. It can also cleave other RNA substrates such as 4.5S RNA. The protein component plays an auxiliary but essential role in vivo by binding to the 5'-leader sequence and broadening the substrate specificity of the ribozyme. This Escherichia coli O157:H7 protein is Ribonuclease P protein component.